We begin with the raw amino-acid sequence, 86 residues long: Photosystem I reaction center subunit PsaK 1 (86 aa).

Positions 1 to 8 (MLTSTLLA) are excised as a propeptide. Helical transmembrane passes span 14–34 (LEWS…AITF) and 60–80 (PALL…VLGL).

It belongs to the PsaG/PsaK family. In terms of assembly, the cyanobacterial PSI reaction center is composed of one copy each of PsaA,B,C,D,E,F,I,J,K,L,M and X, and forms dimeric and tetrameric complexes.

It is found in the cellular thylakoid membrane. This chain is Photosystem I reaction center subunit PsaK 1 (psaK1), found in Nostoc sp. (strain PCC 7120 / SAG 25.82 / UTEX 2576).